The chain runs to 232 residues: Small ribosomal subunit protein uS2 (232 aa).

This sequence belongs to the universal ribosomal protein uS2 family.

This Syntrophomonas wolfei subsp. wolfei (strain DSM 2245B / Goettingen) protein is Small ribosomal subunit protein uS2.